The chain runs to 80 residues: Ataxin-8 (80 aa).

In terms of tissue distribution, specifically found in brains from SCA8 patients (at protein level).

The protein localises to the nucleus. This is Ataxin-8 (ATXN8) from Homo sapiens (Human).